A 236-amino-acid chain; its full sequence is MARHAIFSALCVLGLVAAALPQFATAATASDDELMSRIRNSDFFDGQAPVDSLRPTNAGVDSKGTDDHLTTSMDKASVESQLPRREPLETEPDEQEEVHFRKRGVRSDAEVTDDNIYEEHTDRKVVPRKSEGKRSFKDLLKKLALPAVGMGASYFAADRLVPELTEEQQRGDEPLTTGQNVGTVLGFAALAAAAAFLGMGLTRTYRHFSPRKNRSRQPALEQEVPESGEDGEDARQ.

Residues 1-26 form the signal peptide; sequence MARHAIFSALCVLGLVAAALPQFATA. The interval 45–106 is disordered; sequence DGQAPVDSLR…EVHFRKRGVR (62 aa). Polar residues predominate over residues 70 to 80; the sequence is TTSMDKASVES. A required for dimerization, interactions with liposomes and liposome tubulation region spans residues 147–236; it reads AVGMGASYFA…SGEDGEDARQ (90 aa). A helical membrane pass occupies residues 181–201; it reads VGTVLGFAALAAAAAFLGMGL. The disordered stretch occupies residues 208-236; that stretch reads FSPRKNRSRQPALEQEVPESGEDGEDARQ. Asparagine 213 carries N-linked (GlcNAc...) asparagine glycosylation. The segment covering 223-236 has biased composition (acidic residues); sequence EVPESGEDGEDARQ.

The protein belongs to the Gra7 family. Homodimer. Can form higher order homooligomers in a lipid-stimulated manner. Component of a complex at least composed of ROP18, GRA7 and ROP2. Interacts with ROP5. Interacts with ROP18 in the absence of ROP5. Interacts with mouse IRGA6/IIGP1 in GTP-dependent manner; the interaction results in faster turnover of the GTP-activated IRGA6/IIGP1 oligomer. Interacts with mouse TRAF6 (via N-terminal RING domain); the interaction plays a role in GRA7-induced pro-inflammatory cytokine production in mouse macrophages.

The protein resides in the secreted. It is found in the parasitophorous vacuole lumen. The protein localises to the parasitophorous vacuole membrane. Its subcellular location is the cytoplasm. It localises to the host cytoplasm. The protein resides in the cytoplasmic vesicle. It is found in the secretory vesicle. In terms of biological role, binds lipid bilayers, sequesters host endocytic organelles in the parasitophorous vacuole space, and causes their deformation and remodeling. Plays a role in nutrient acquisition from the host. In complex with ROP18, targets immunity-related GTPases (IRGs) to prevent IRG-mediated parasite killing by mouse cells. Important component within a kinase complex, contributing to phosphorylation of mouse IRGA6/IIGP1, an immunity-related GTPase that protects mice from infection by certain intracellular pathogens, by Toxoplasma gondii ROP5 and ROP18. Induces pro-inflammatory cytokine production in host macrophages. Activates host pro-inflammatory signaling pathways in a MyD88-dependent manner. Triggers generation of reactive oxygen species (ROS) in host cells. Activates MAPK pathway in host cells. Activates host NF-kappa-B signaling pathway by interacting with TRAF6 and modulating the 'Lys-63'-linked polyubiquitination of TRAF6. In Toxoplasma gondii, this protein is Dense granule protein 7.